The chain runs to 287 residues: ATP synthase gamma chain (287 aa).

Belongs to the ATPase gamma chain family. F-type ATPases have 2 components, CF(1) - the catalytic core - and CF(0) - the membrane proton channel. CF(1) has five subunits: alpha(3), beta(3), gamma(1), delta(1), epsilon(1). CF(0) has three main subunits: a, b and c.

It localises to the cell inner membrane. Produces ATP from ADP in the presence of a proton gradient across the membrane. The gamma chain is believed to be important in regulating ATPase activity and the flow of protons through the CF(0) complex. The sequence is that of ATP synthase gamma chain from Escherichia coli (strain 55989 / EAEC).